We begin with the raw amino-acid sequence, 700 residues long: Polyribonucleotide nucleotidyltransferase (700 aa).

Positions 485 and 491 each coordinate Mg(2+). Residues 552-611 (PRITVIKINPEKIRDVIGKGGAVIRALTEETGTTIELEDDGTVKIASSNGEATKEAIRRI) form the KH domain. In terms of domain architecture, S1 motif spans 621–689 (GRIYNGKVIR…RQGRVRLSIK (69 aa)).

Belongs to the polyribonucleotide nucleotidyltransferase family. In terms of assembly, component of the RNA degradosome, which is a multiprotein complex involved in RNA processing and mRNA degradation. Requires Mg(2+) as cofactor.

It localises to the cytoplasm. It carries out the reaction RNA(n+1) + phosphate = RNA(n) + a ribonucleoside 5'-diphosphate. Functionally, involved in mRNA degradation. Catalyzes the phosphorolysis of single-stranded polyribonucleotides processively in the 3'- to 5'-direction. In Shewanella baltica (strain OS185), this protein is Polyribonucleotide nucleotidyltransferase.